The sequence spans 329 residues: Synaptonemal complex central element protein 1 (329 aa).

Residues methionine 1–glutamine 33 are disordered. 2 coiled-coil regions span residues arginine 28–methionine 168 and lysine 194–glutamine 294. Residues isoleucine 295–threonine 329 form a disordered region. The segment covering leucine 314–threonine 329 has biased composition (basic and acidic residues).

The protein belongs to the SYCE family. In terms of assembly, homodimer. Found in a complex with SYCP1 and SYCE2. Interacts with SYCP1, SYCE2 and SYCE3. Interacts with SIX6OS1.

The protein resides in the nucleus. It localises to the chromosome. Its function is as follows. Major component of the transverse central element of synaptonemal complexes (SCS), formed between homologous chromosomes during meiotic prophase. Requires SYCP1 in order to be incorporated into the central element. May have a role in the synaptonemal complex assembly, stabilization and recombination. This is Synaptonemal complex central element protein 1 (Syce1) from Rattus norvegicus (Rat).